A 318-amino-acid polypeptide reads, in one-letter code: NADH-ubiquinone oxidoreductase chain 1 (318 aa).

8 consecutive transmembrane segments (helical) span residues phenylalanine 2–leucine 22, phenylalanine 69–leucine 89, leucine 102–alanine 122, methionine 146–alanine 166, histidine 171–alanine 191, leucine 222–phenylalanine 242, glutamate 253–valine 273, and leucine 294–isoleucine 314.

Belongs to the complex I subunit 1 family.

The protein localises to the mitochondrion inner membrane. It carries out the reaction a ubiquinone + NADH + 5 H(+)(in) = a ubiquinol + NAD(+) + 4 H(+)(out). Its function is as follows. Core subunit of the mitochondrial membrane respiratory chain NADH dehydrogenase (Complex I) that is believed to belong to the minimal assembly required for catalysis. Complex I functions in the transfer of electrons from NADH to the respiratory chain. The immediate electron acceptor for the enzyme is believed to be ubiquinone. The polypeptide is NADH-ubiquinone oxidoreductase chain 1 (MT-ND1) (Loxodonta africana (African elephant)).